Reading from the N-terminus, the 550-residue chain is Chaperonin GroEL (550 aa).

ATP-binding positions include 30–33 (TLGP), K51, 87–91 (DGTTT), G415, 479–481 (NAA), and D495.

It belongs to the chaperonin (HSP60) family. As to quaternary structure, forms a cylinder of 14 subunits composed of two heptameric rings stacked back-to-back. Interacts with the co-chaperonin GroES.

The protein resides in the cytoplasm. It catalyses the reaction ATP + H2O + a folded polypeptide = ADP + phosphate + an unfolded polypeptide.. Its function is as follows. Together with its co-chaperonin GroES, plays an essential role in assisting protein folding. The GroEL-GroES system forms a nano-cage that allows encapsulation of the non-native substrate proteins and provides a physical environment optimized to promote and accelerate protein folding. This Polynucleobacter asymbioticus (strain DSM 18221 / CIP 109841 / QLW-P1DMWA-1) (Polynucleobacter necessarius subsp. asymbioticus) protein is Chaperonin GroEL.